A 303-amino-acid polypeptide reads, in one-letter code: Crk-like protein (303 aa).

The 89-residue stretch at 14-102 (WYMGPVSRQE…LDTTTLIEPA (89 aa)) folds into the SH2 domain. In terms of domain architecture, SH3 1 spans 123 to 183 (ENLEYVRTLY…PVPYVEKLVR (61 aa)). Y127 is subject to Phosphotyrosine. A disordered region spans residues 184–204 (SSPHGKHGNRNSNSYGIPEPA). Phosphotyrosine is present on Y207. In terms of domain architecture, SH3 2 spans 235 to 296 (NGPVFAKAIQ…PFTHVKIFDP (62 aa)).

Belongs to the CRK family. As to quaternary structure, interacts with INPP5D/SHIP1. Interacts with DOCK2 and EPOR. Interacts with phosphorylated CBLB and IRS4. Interacts with BCAR1/CAS and NEDD9/HEF1.

May mediate the transduction of intracellular signals. The chain is Crk-like protein from Rattus norvegicus (Rat).